The chain runs to 92 residues: Putative transition state regulator Abh (92 aa).

The SpoVT-AbrB domain occupies glycine 5–proline 50.

The protein to B.subtilis AbrB and SpoVT.

In Bacillus subtilis (strain 168), this protein is Putative transition state regulator Abh (abh).